Reading from the N-terminus, the 60-residue chain is Large ribosomal subunit protein bL32 (60 aa).

Residues 1-60 form a disordered region; sequence MAVQQNKKSPSKRGMHRSHDFLVNPATAIEPNTGETHLRHHISPNGFYRGRKVLKTKADE. Positions 49-60 are enriched in basic residues; the sequence is RGRKVLKTKADE.

It belongs to the bacterial ribosomal protein bL32 family.

The sequence is that of Large ribosomal subunit protein bL32 from Bordetella bronchiseptica (strain ATCC BAA-588 / NCTC 13252 / RB50) (Alcaligenes bronchisepticus).